A 447-amino-acid chain; its full sequence is uncharacterized protein (447 aa).

This is an uncharacterized protein from Mus musculus (Mouse).